The sequence spans 142 residues: Large ribosomal subunit protein uL13 (142 aa).

It belongs to the universal ribosomal protein uL13 family. Part of the 50S ribosomal subunit.

In terms of biological role, this protein is one of the early assembly proteins of the 50S ribosomal subunit, although it is not seen to bind rRNA by itself. It is important during the early stages of 50S assembly. The sequence is that of Large ribosomal subunit protein uL13 from Aeromonas salmonicida (strain A449).